We begin with the raw amino-acid sequence, 370 residues long: Alpha-(1,3)-fucosyltransferase 7 (370 aa).

Over 1–36 (MVQGCLCWRGCCDLKTSFPWVTNSRRLWMNCIGCNP) the chain is Cytoplasmic. Residues 37–59 (VWRLRAWGCLAGGTTLMVIWLFW) form a helical; Signal-anchor for type II membrane protein membrane-spanning segment. Residues 60-370 (LLRSVPGGAP…YEDLESWFQA (311 aa)) lie on the Lumenal side of the membrane. N-linked (GlcNAc...) asparagine glycosylation is present at Asn-86. Cys-96 and Cys-104 are oxidised to a cystine. The N-linked (GlcNAc...) asparagine glycan is linked to Asn-109. Cysteines 239 and 242 form a disulfide. N-linked (GlcNAc...) asparagine glycosylation is present at Asn-319. The cysteines at positions 346 and 349 are disulfide-linked.

It belongs to the glycosyltransferase 10 family. In terms of processing, N-glycosylated. Expressed in lymph node and kidney.

The protein localises to the golgi apparatus. It is found in the golgi stack membrane. It catalyses the reaction an N-acetyl-alpha-neuraminyl-(2-&gt;3)-beta-D-galactosyl-(1-&gt;4)-N-acetyl-beta-D-glucosaminyl derivative + GDP-beta-L-fucose = an alpha-Neu5Ac-(2-&gt;3)-beta-D-Gal-(1-&gt;4)-[alpha-L-Fuc-(1-&gt;3)]-beta-D-GlcNAc derivative + GDP + H(+). The catalysed reaction is a neolactoside IV(3)-alpha-NeuAc-nLc4Cer + GDP-beta-L-fucose = a neolactoside IV(3)-alpha-NeuNAc,III(3)-alpha-Fuc-nLc4Cer + GDP + H(+). It carries out the reaction a neolactoside VI(3)-alpha-NeuNAc-nLc6Cer + GDP-beta-L-fucose = a neolactoside VI(3)-alpha-NeuAc,V(3)-alphaFuc-nLc6Cer + GDP + H(+). The enzyme catalyses an alpha-Neu5Ac-(2-&gt;3)-beta-D-Gal-(1-&gt;4)-beta-D-GlcNAc-(1-&gt;3)-beta-D-Gal-(1-&gt;4)-[alpha-L-Fuc-(1-&gt;3)]-beta-D-GlcNAc derivative + GDP-beta-L-fucose = an alpha-Neu5Ac-(2-&gt;3)-beta-D-Gal-(1-&gt;4)-[alpha-L-Fuc-(1-&gt;3)]-beta-D-GlcNAc-(1-&gt;3)-beta-D-Gal-(1-&gt;4)-[alpha-L-Fuc-(1-&gt;3)]-beta-D-GlcNAc derivative + GDP + H(+). It catalyses the reaction an alpha-Neu5Ac-(2-&gt;3)-beta-D-Gal-(1-&gt;4)-beta-D-GlcNAc6S derivative + GDP-beta-L-fucose = an alpha-Neu5Ac-(2-&gt;3)-beta-D-Gal-(1-&gt;4)-[alpha-L-Fuc-(1-&gt;3)]-beta-D-GlcNAc6S derivative + GDP + H(+). The catalysed reaction is alpha-Neu5Ac-(2-&gt;3)-beta-D-Gal-(1-&gt;4)-beta-D-GlcNAc-(1-&gt;3)-beta-D-Gal-(1-&gt;4)-D-Glc + GDP-beta-L-fucose = alpha-Neu5Ac-(2-&gt;3)-beta-D-Gal-(1-&gt;4)-[alpha-L-Fuc-(1-&gt;3)]-beta-D-GlcNAc-(1-&gt;3)-beta-D-Gal-(1-&gt;4)-D-Glc + GDP + H(+). It carries out the reaction alpha-Neu5Ac-(2-&gt;3)-beta-D-Gal-(1-&gt;4)-beta-D-GlcNAc-(1-&gt;3)-beta-D-Gal-(1-&gt;4)-[alpha-L-Fuc-(1-&gt;3)]-beta-D-GlcNAc-(1-&gt;3)-beta-D-Gal-(1-&gt;4)-beta-D-GlcNAc + GDP-beta-L-fucose = alpha-Neu5Ac-(2-&gt;3)-beta-D-Gal-(1-&gt;4)-[alpha-L-Fuc-(1-&gt;3)]-beta-D-GlcNAc-(1-&gt;3)-beta-D-Gal-(1-&gt;4)-[alpha-L-Fuc-(1-&gt;3)]-beta-D-GlcNAc-(1-&gt;3)-beta-D-Gal-(1-&gt;4)-beta-D-GlcNAc + GDP + H(+). The enzyme catalyses alpha-Neu5Ac-(2-&gt;3)-beta-D-Gal-(1-&gt;4)-beta-D-GlcNAc-(1-&gt;3)-beta-D-Gal-(1-&gt;4)-beta-D-GlcNAc-(1-&gt;3)-beta-D-Gal-(1-&gt;4)-beta-D-GlcNAc + GDP-beta-L-fucose = alpha-Neu5Ac-(2-&gt;3)-beta-D-Gal-(1-&gt;4)-[alpha-L-Fuc-(1-&gt;3)]-beta-D-GlcNAc-(1-&gt;3)-beta-D-Gal-(1-&gt;4)-beta-D-GlcNAc-(1-&gt;3)-beta-D-Gal-(1-&gt;4)-beta-D-GlcNAc + GDP + H(+). It participates in protein modification; protein glycosylation. With respect to regulation, inhibited by NaCl. Inhibited by GDP in a concentration dependent manner, with an IC(50) value of 93 uM. Also inhibited by GMP and GTP. Inhibited by N-ethylmaleimide. Activated by poly(ethylene glycol) by enhancing the thermal stability of FUT7. Activated by Mn2+, Ca2+, and Mg2+. Both panosialin A and B inhibit activity with IC(50) values of 4.8 and 5.3 ug/ml, respectively. Inhibited by gallic acid (GA) and (-)-epigallocatechin gallate (EGCG) in a time-dependent and irreversible manner with IC(50) values of 60 and 700 nM, respectively. Functionally, catalyzes the transfer of L-fucose, from a guanosine diphosphate-beta-L-fucose, to the N-acetyl glucosamine (GlcNAc) of a distal alpha2,3 sialylated lactosamine unit of a glycoprotein or a glycolipid-linked sialopolylactosamines chain through an alpha-1,3 glycosidic linkage and participates in the final fucosylation step in the biosynthesis of the sialyl Lewis X (sLe(x)), a carbohydrate involved in cell and matrix adhesion during leukocyte trafficking and fertilization. In vitro, also synthesizes sialyl-dimeric-Lex structures, from VIM-2 structures and both di-fucosylated and trifucosylated structures from mono-fucosylated precursors. However does not catalyze alpha 1-3 fucosylation when an internal alpha 1-3 fucosylation is present in polylactosamine chain and the fucosylation rate of the internal GlcNAc residues is reduced once fucose has been added to the distal GlcNAc. Also catalyzes the transfer of a fucose from GDP-beta-fucose to the 6-sulfated a(2,3)sialylated substrate to produce 6-sulfo sLex mediating significant L-selectin-dependent cell adhesion. Through sialyl-Lewis(x) biosynthesis, can control SELE- and SELP-mediated cell adhesion with leukocytes and allows leukocytes tethering and rolling along the endothelial tissue thereby enabling the leukocytes to accumulate at a site of inflammation. May enhance embryo implantation through sialyl Lewis X (sLeX)-mediated adhesion of embryo cells to endometrium. May affect insulin signaling by up-regulating the phosphorylation and expression of some signaling molecules involved in the insulin-signaling pathway through SLe(x) which is present on the glycans of the INSRR alpha subunit. The chain is Alpha-(1,3)-fucosyltransferase 7 from Rattus norvegicus (Rat).